Here is a 772-residue protein sequence, read N- to C-terminus: Annulin (772 aa).

Residues Cys4 and Cys5 are each lipidated (S-palmitoyl cysteine). The segment at Asn15–Asp57 is disordered. Residues Leu38–Gly53 show a composition bias toward pro residues. Residues His400 and Asp427 contribute to the active site. Positions 467, 469, 517, and 522 each coordinate Ca(2+).

Belongs to the transglutaminase superfamily. Transglutaminase family. It depends on Ca(2+) as a cofactor. As to expression, has an annular, or ring-like expression pattern in epithelial annuli of developing limb segment boundary cells. In embryos, it is seen in gastrulating cells, in cells surrounding rapidly dividing neuroblasts, and in muscle pioneer cells invaginating to form apodemes.

The protein localises to the cell membrane. It catalyses the reaction L-glutaminyl-[protein] + L-lysyl-[protein] = [protein]-L-lysyl-N(6)-5-L-glutamyl-[protein] + NH4(+). Functionally, participates in morphogenetic activities of the cells, maybe by stabilizing the membrane or subcortical structures of cells that are under mechanical stress. Probably catalyzes the cross-linking of proteins and the conjugation of polyamines to proteins. The protein is Annulin of Schistocerca americana (American grasshopper).